The chain runs to 876 residues: Serrate RNA effector molecule homolog (876 aa).

The segment at Met1 to Asp90 is disordered. Gly2 carries the post-translational modification N-acetylglycine. Ser4 is subject to Phosphoserine. Tyr8 carries the phosphotyrosine modification. Basic and acidic residues predominate over residues Tyr8–Leu73. Phosphoserine occurs at positions 67, 74, and 136. Lys150 participates in a covalent cross-link: Glycyl lysine isopeptide (Lys-Gly) (interchain with G-Cter in SUMO2). The tract at residues Glu271 to Cys412 is disordered. The segment covering Asp297–Lys347 has biased composition (basic and acidic residues). Over residues Ser370–Glu387 the composition is skewed to acidic residues. The segment covering Glu388 to Cys412 has biased composition (basic and acidic residues). A phosphoserine mark is found at Ser493 and Ser540. Phosphothreonine is present on Thr544. Ser570 is subject to Phosphoserine. The interval Glu575 to Asn598 is disordered. Residue Thr671 is modified to Phosphothreonine. Ser679 carries the phosphoserine modification. An omega-N-methylarginine mark is found at Arg833, Arg840, and Arg850. Positions Asn835–Val854 are disordered.

It belongs to the ARS2 family. As to quaternary structure, interacts with NCBP1 and DROSHA. Interacts with CASP8AP2 and ERBB4. Interacts with LUZP4. Interacts with NCBP2/CBP20 and NCBP3. Interacts with MTREX. As to expression, ubiquitously expressed.

It localises to the nucleus. The protein localises to the nucleoplasm. The protein resides in the cytoplasm. Its function is as follows. Acts as a mediator between the cap-binding complex (CBC) and the primary microRNAs (miRNAs) processing machinery during cell proliferation. Contributes to the stability and delivery of capped primary miRNA transcripts to the primary miRNA processing complex containing DGCR8 and DROSHA, thereby playing a role in RNA-mediated gene silencing (RNAi) by miRNAs. Binds capped RNAs (m7GpppG-capped RNA); however interaction is probably mediated via its interaction with NCBP1/CBP80 component of the CBC complex. Involved in cell cycle progression at S phase. Does not directly confer arsenite resistance but rather modulates arsenic sensitivity. Independently of its activity on miRNAs, necessary and sufficient to promote neural stem cell self-renewal. Does so by directly binding SOX2 promoter and positively regulating its transcription. This is Serrate RNA effector molecule homolog (SRRT) from Homo sapiens (Human).